Reading from the N-terminus, the 36-residue chain is Potassium channel toxin alpha-KTx 16.5 (36 aa).

3 cysteine pairs are disulfide-bonded: cysteine 7–cysteine 28, cysteine 13–cysteine 33, and cysteine 17–cysteine 35. An interaction with Ca(2+)-activated K(+) channels region spans residues 26 to 33; the sequence is GKCQNKQC.

Belongs to the short scorpion toxin superfamily. Potassium channel inhibitor family. Alpha-KTx 16 subfamily. As to expression, expressed by the venom gland.

The protein localises to the secreted. Its function is as follows. Augments responses to direct muscle stimulation probably by blocking calcium-activated potassium channels. This Leiurus hebraeus (Hebrew deathstalker scorpion) protein is Potassium channel toxin alpha-KTx 16.5.